A 759-amino-acid chain; its full sequence is DNA topoisomerase 4 subunit A (759 aa).

The 473-residue stretch at 44–516 (LPDVRDGLKP…VFGEAPQVDA (473 aa)) folds into the Topo IIA-type catalytic domain. Y132 (O-(5'-phospho-DNA)-tyrosine intermediate) is an active-site residue.

This sequence belongs to the type II topoisomerase GyrA/ParC subunit family. ParC type 1 subfamily. As to quaternary structure, heterotetramer composed of ParC and ParE.

Its subcellular location is the cell membrane. It catalyses the reaction ATP-dependent breakage, passage and rejoining of double-stranded DNA.. Topoisomerase IV is essential for chromosome segregation. It relaxes supercoiled DNA. Performs the decatenation events required during the replication of a circular DNA molecule. This is DNA topoisomerase 4 subunit A from Caulobacter vibrioides (strain ATCC 19089 / CIP 103742 / CB 15) (Caulobacter crescentus).